Here is a 92-residue protein sequence, read N- to C-terminus: Small ribosomal subunit protein uS19 (92 aa).

The protein belongs to the universal ribosomal protein uS19 family.

Protein S19 forms a complex with S13 that binds strongly to the 16S ribosomal RNA. The protein is Small ribosomal subunit protein uS19 of Shigella boydii serotype 18 (strain CDC 3083-94 / BS512).